The chain runs to 141 residues: Nucleoside diphosphate kinase (141 aa).

The ATP site is built by Lys-11, Phe-59, Arg-87, Thr-93, Arg-104, and Asn-114. His-117 serves as the catalytic Pros-phosphohistidine intermediate.

This sequence belongs to the NDK family. In terms of assembly, homotetramer. Requires Mg(2+) as cofactor.

The protein localises to the cytoplasm. The catalysed reaction is a 2'-deoxyribonucleoside 5'-diphosphate + ATP = a 2'-deoxyribonucleoside 5'-triphosphate + ADP. It catalyses the reaction a ribonucleoside 5'-diphosphate + ATP = a ribonucleoside 5'-triphosphate + ADP. In terms of biological role, major role in the synthesis of nucleoside triphosphates other than ATP. The ATP gamma phosphate is transferred to the NDP beta phosphate via a ping-pong mechanism, using a phosphorylated active-site intermediate. This is Nucleoside diphosphate kinase from Cellvibrio japonicus (strain Ueda107) (Pseudomonas fluorescens subsp. cellulosa).